Here is a 172-residue protein sequence, read N- to C-terminus: Adenine phosphoribosyltransferase (172 aa).

It belongs to the purine/pyrimidine phosphoribosyltransferase family. As to quaternary structure, homodimer.

The protein resides in the cytoplasm. The enzyme catalyses AMP + diphosphate = 5-phospho-alpha-D-ribose 1-diphosphate + adenine. It functions in the pathway purine metabolism; AMP biosynthesis via salvage pathway; AMP from adenine: step 1/1. Its function is as follows. Catalyzes a salvage reaction resulting in the formation of AMP, that is energically less costly than de novo synthesis. This chain is Adenine phosphoribosyltransferase, found in Methanococcus maripaludis (strain DSM 14266 / JCM 13030 / NBRC 101832 / S2 / LL).